A 233-amino-acid chain; its full sequence is MAKLTKRARLIAEKVEATKLYSVEEAVALLSELSTVKFKESIDVSVNLGVDPRKSDQVVRGSTVLPHGAGKDVRVAVFAQGANAEAAKEAGADVVGFEDLAEQVKAGNLDFDVVIASPDAMRIVGQLGQVLGPRGLMPNPKVGTVTPDVATAVRNAKAGQARYRTDKNGIIHAAVGSIEFAADAIRGNLEALLTDLRRAKPASSKGVYLRKVTLSSTMGPGLQIDLGALNSTK.

This sequence belongs to the universal ribosomal protein uL1 family. As to quaternary structure, part of the 50S ribosomal subunit.

In terms of biological role, binds directly to 23S rRNA. The L1 stalk is quite mobile in the ribosome, and is involved in E site tRNA release. Protein L1 is also a translational repressor protein, it controls the translation of the L11 operon by binding to its mRNA. The polypeptide is Large ribosomal subunit protein uL1 (Marinomonas sp. (strain MWYL1)).